A 588-amino-acid chain; its full sequence is Probable cytochrome c oxidase subunit 1-beta (588 aa).

Residues 1-26 are disordered; that stretch reads MTATPAQRRPALPATRPYPARHGPKG. Residues 43–63 traverse the membrane as a helical segment; the sequence is VLYLVSATGFFLIGGLLALLM. His87 is a Fe(II)-heme a binding site. Helical transmembrane passes span 90 to 110, 128 to 148, 171 to 191, 214 to 234, 259 to 279, and 291 to 311; these read IMLL…VLPL, WLYL…GGAA, LWIL…VNMI, ILIT…ALMA, LFWF…FGII, and IFGY…SMAV. 2 residues coordinate Cu cation: His265 and Tyr269. The segment at residues 265–269 is a cross-link (1'-histidyl-3'-tyrosine (His-Tyr)); the sequence is HPEVY. Positions 314 and 315 each coordinate Cu cation. 2 helical membrane passes run 320–340 and 360–380; these read GAVL…PTGV and MLFA…GVIL. His398 is a binding site for heme a3. 3 consecutive transmembrane segments (helical) span residues 399–419, 434–454, and 477–497; these read FHYV…YFWF, LHFW…HWLG, and VSTI…WNGF. Residue His400 participates in Fe(II)-heme a binding. Positions 557 to 588 are disordered; that stretch reads AEAHAGRRAGHGAGAELSVPSTVATKDDDHTS.

This sequence belongs to the heme-copper respiratory oxidase family. As to quaternary structure, associates with subunits II, III and IV to form cytochrome c oxidase. Cu(2+) is required as a cofactor. Requires heme as cofactor.

It localises to the cell membrane. The catalysed reaction is 4 Fe(II)-[cytochrome c] + O2 + 8 H(+)(in) = 4 Fe(III)-[cytochrome c] + 2 H2O + 4 H(+)(out). It functions in the pathway energy metabolism; oxidative phosphorylation. In terms of biological role, cytochrome c oxidase is the component of the respiratory chain that catalyzes the reduction of oxygen to water. Subunits 1-3 form the functional core of the enzyme complex. CO I is the catalytic subunit of the enzyme. Electrons originating in cytochrome c are transferred via the copper A center of subunit 2 and heme A of subunit 1 to the bimetallic center formed by heme A3 and copper B. This is Probable cytochrome c oxidase subunit 1-beta (ctaD2) from Nocardia farcinica (strain IFM 10152).